A 51-amino-acid polypeptide reads, in one-letter code: MQQPQNITTSSISNNNNNNTSLTLQQQQEQLQQLQIKRKRNLMKQLQHVSH.

The disordered stretch occupies residues 1–28 (MQQPQNITTSSISNNNNNNTSLTLQQQQ). Residues 13 to 47 (SNNNNNNTSLTLQQQQEQLQQLQIKRKRNLMKQLQ) adopt a coiled-coil conformation.

This is an uncharacterized protein from Dictyostelium discoideum (Social amoeba).